Here is a 667-residue protein sequence, read N- to C-terminus: MDDTTYKPKNILITGAAGFIASHVANRLIRNYPDYKIVVLDKLDYCSDLKNLDPSFSSPNFKFVKGDIASDDLVNYLLITENIDTIMHFAAQTHVDNSFGNSFEFTKNNIYGTHVLLEACKVTGQIRRFIHVSTDEVYGETDEDAAVGNHEASQLLPTNPYSATKAGAEMLVMAYGRSYGLPVITTRGNNVYGPNQFPEKMIPKFILLAMSGKPLPIHGDGSNVRSYLYCEDVAEAFEVVLHKGEIGHVYNVGTKRERRVIDVARDICKLFGKDPESSIQFVENRPFNDQRYFLDDQKLKKLGWQERTNWEDGLKKTMDWYTQNPEWWGDVSGALLPHPRMLMMPGGRLSDGSSEKKDVSSNTVQTFTVVTPKNGDSGDKASLKFLIYGKTGWLGGLLGKLCEKQGITYEYGKGRLEDRASLVADIRSIKPTHVFNAAGLTGRPNVDWCESHKPETIRVNVAGTLTLADVCRENDLLMMNFATGCIFEYDATHPEGSGIGFKEEDKPNFFGSFYSKTKAMVEELLREFDNVCTLRVRMPISSDLNNPRNFITKISRYNKVVDIPNSMTVLDELLPISIEMAKRNLRGIWNFTNPGVVSHNEILEMYKNYIEPGFKWSNFTVEEQAKVIVAARSNNEMDGSKLSKEFPEMLSIKESLLKYVFEPNKRT.

Residue 15 to 21 participates in NAD(+) binding; it reads GAAGFIA. Position 134 (Thr134) interacts with substrate. Asp135 (proton donor) is an active-site residue. Catalysis depends on proton acceptor residues Glu136 and Tyr161. 389-395 contacts NADP(+); it reads GKTGWLG.

This sequence in the N-terminal section; belongs to the NAD(P)-dependent epimerase/dehydratase family. dTDP-glucose dehydratase subfamily. In the C-terminal section; belongs to the dTDP-4-dehydrorhamnose reductase family. The cofactor is NAD(+). NADP(+) is required as a cofactor. Expressed in roots, stems, leaves, seedlings, inflorescence tips, and siliques.

The enzyme catalyses UDP-alpha-D-glucose = UDP-4-dehydro-6-deoxy-alpha-D-glucose + H2O. It participates in carbohydrate biosynthesis. Trifunctional enzyme involved in UDP-beta-L-rhamnose biosynthesis, a precursor of the primary cell wall components rhamnogalacturonan I (RG-I) and rhamnogalacturonan II (RG-II). Catalyzes the dehydration of UDP-glucose to form UDP-4-dehydro-6-deoxy-D-glucose followed by the epimerization of the C3' and C5' positions of UDP-4-dehydro-6-deoxy-D-glucose to form UDP-4-keto-beta-L-rhamnose and the reduction of UDP-4-keto-beta-L-rhamnose to yield UDP-beta-L-rhamnose. Required for the normal seed coat epidermal development. In Arabidopsis thaliana (Mouse-ear cress), this protein is Trifunctional UDP-glucose 4,6-dehydratase/UDP-4-keto-6-deoxy-D-glucose 3,5-epimerase/UDP-4-keto-L-rhamnose-reductase RHM2.